A 285-amino-acid polypeptide reads, in one-letter code: Pantothenate synthetase (285 aa).

ATP is bound at residue 30 to 37; that stretch reads MGNLHDGH. The active-site Proton donor is His37. Gln61 is a binding site for (R)-pantoate. Residue Gln61 participates in beta-alanine binding. 149–152 contributes to the ATP binding site; sequence GEKD. Gln155 is a (R)-pantoate binding site. ATP-binding positions include Ile178 and 186–189; that span reads LSSR.

This sequence belongs to the pantothenate synthetase family. Homodimer.

It is found in the cytoplasm. It carries out the reaction (R)-pantoate + beta-alanine + ATP = (R)-pantothenate + AMP + diphosphate + H(+). The protein operates within cofactor biosynthesis; (R)-pantothenate biosynthesis; (R)-pantothenate from (R)-pantoate and beta-alanine: step 1/1. Functionally, catalyzes the condensation of pantoate with beta-alanine in an ATP-dependent reaction via a pantoyl-adenylate intermediate. The sequence is that of Pantothenate synthetase from Buchnera aphidicola subsp. Acyrthosiphon pisum (strain 5A).